We begin with the raw amino-acid sequence, 523 residues long: Exodeoxyribonuclease 7 large subunit (523 aa).

The segment at 502–523 (PGASPAARTRAGKAKADQGSLF) is disordered.

It belongs to the XseA family. In terms of assembly, heterooligomer composed of large and small subunits.

The protein localises to the cytoplasm. It catalyses the reaction Exonucleolytic cleavage in either 5'- to 3'- or 3'- to 5'-direction to yield nucleoside 5'-phosphates.. Its function is as follows. Bidirectionally degrades single-stranded DNA into large acid-insoluble oligonucleotides, which are then degraded further into small acid-soluble oligonucleotides. The chain is Exodeoxyribonuclease 7 large subunit from Rhodospirillum centenum (strain ATCC 51521 / SW).